Here is a 378-residue protein sequence, read N- to C-terminus: Probable pectin lyase C (378 aa).

An N-terminal signal peptide occupies residues 1 to 18; sequence MKVPFLQLLCLNAALASA. Intrachain disulfides connect Cys-81/Cys-100 and Cys-90/Cys-220. Asn-123 is a glycosylation site (N-linked (GlcNAc...) asparagine). Residue Arg-250 is part of the active site. A disulfide bridge connects residues Cys-316 and Cys-324.

This sequence belongs to the polysaccharide lyase 1 family.

It localises to the secreted. The enzyme catalyses Eliminative cleavage of (1-&gt;4)-alpha-D-galacturonan methyl ester to give oligosaccharides with 4-deoxy-6-O-methyl-alpha-D-galact-4-enuronosyl groups at their non-reducing ends.. In terms of biological role, pectinolytic enzymes consist of four classes of enzymes: pectin lyase, polygalacturonase, pectin methylesterase and rhamnogalacturonase. Among pectinolytic enzymes, pectin lyase is the most important in depolymerization of pectin, since it cleaves internal glycosidic bonds of highly methylated pectins. This Aspergillus niger protein is Probable pectin lyase C (pelC).